Here is a 520-residue protein sequence, read N- to C-terminus: Aspartate-proton symporter (520 aa).

The next 14 helical transmembrane spans lie at Leu-13–Val-33, Ile-49–Leu-69, His-85–Ile-105, Thr-130–Trp-150, Ile-161–Phe-181, Ala-201–Val-221, Ile-232–Val-252, Ile-281–Ser-301, Trp-345–Val-365, Asn-366–Leu-386, Met-402–Trp-422, Val-425–Tyr-445, Ala-460–Gly-480, and Gly-482–Ile-502.

Belongs to the amino acid-polyamine-organocation (APC) superfamily. AGT (TC 2.A.3.11) family.

It localises to the cell membrane. Its function is as follows. Uptake of L-aspartate with the concomitant import of a proton. Can also transport aspartate hydroxamate and L-glutamate with lower affinity and efficiency. In Bacillus subtilis (strain 168), this protein is Aspartate-proton symporter (yveA).